The following is a 523-amino-acid chain: MLVELAITLLVIALFIHLRPTLSAKSKSLRHLPNPPSPKPRLPFVGHLHLLDKPLLHYSLIDLSKRYGPLYSLYFGSMPTVVASTPELFKLFLQTHEASSFNTRFQTSAIRRLTYDNSVAMVPFGPYWKFIRKLIMNDLLNATTVNKLRPLRSQEIRKVLRVMAQSAESQVPLNVTEELLKWTNSTISRMMLGEAEEIRDIARDVLKIFGEYSLTDFIWPLKKLKVGQYEKRIDDIFNRFDPVIERVIKKRQEIRKKRKERNGEIEEGEQSVVFLDTLLDFAEDETMEIKITKEQIKGLVVDFFSAGTDSTAVATDWALSELINNPRVFQKAREEIDAVVGKDRLVDEADVQNLPYIRSIVKETFRMHPPLPVVKRKCVQECEVDGYVIPEGALILFNVWAVGRDPKYWDRPTEFRPERFLENVGEGDQAVDLRGQHFQLLPFGSGRRMCPGVNLATAGMATLLASVIQCFDLSVVGPQGKILKGNDAKVSMEERAGLTVPRAHNLICVPVARSSAVPKLFSS.

A helical transmembrane segment spans residues 2 to 22 (LVELAITLLVIALFIHLRPTL). A heme-binding site is contributed by Cys-450.

This sequence belongs to the cytochrome P450 family. The cofactor is heme.

It localises to the microsome membrane. The catalysed reaction is (2S)-liquiritigenin + reduced [NADPH--hemoprotein reductase] + O2 = (2R,3S)-2,4',7-trihydroxyisoflavanone + oxidized [NADPH--hemoprotein reductase] + H2O + H(+). It catalyses the reaction (2S)-naringenin + reduced [NADPH--hemoprotein reductase] + O2 = 2-hydroxy-2,3-dihydrogenistein + oxidized [NADPH--hemoprotein reductase] + H2O + H(+). Its function is as follows. 2-hydroxyisoflavanone synthase, which catalyzes the hydroxylation associated with 1,2-aryl migration of flavanones. Converts liquiritigenin and naringenin into highly unstable precursors of the isoflavones daidzein and genistein. Acts only on substrates with (2S)-chirality. The chain is 2-hydroxyisoflavanone synthase (CYP93C2) from Glycyrrhiza echinata (Licorice).